The following is a 498-amino-acid chain: Aldehyde dehydrogenase, mitochondrial (498 aa).

The transit peptide at 1–9 (MLRATLARL) directs the protein to the mitochondrion. 242-247 (GSTAVG) is a binding site for NAD(+). The Proton acceptor role is filled by glutamate 265. Cysteine 299 functions as the Nucleophile in the catalytic mechanism.

The protein belongs to the aldehyde dehydrogenase family.

The protein localises to the mitochondrion. The catalysed reaction is an aldehyde + NAD(+) + H2O = a carboxylate + NADH + 2 H(+). It functions in the pathway alcohol metabolism; ethanol degradation; acetate from ethanol: step 2/2. In terms of biological role, could have an RNA-binding activity in addition of its catalytic role. The polypeptide is Aldehyde dehydrogenase, mitochondrial (ALDH2) (Leishmania tarentolae (Sauroleishmania tarentolae)).